Consider the following 152-residue polypeptide: Neuropeptide W (152 aa).

The N-terminal stretch at 1–32 is a signal peptide; the sequence is MGARGPGPGATARRRLLALLLLLLLLPLPARA. Positions 65 to 152 are excised as a propeptide; the sequence is ALRPAAGPLA…LGASSWTSAE (88 aa). Disordered regions lie at residues 79–108 and 122–152; these read GQDV…LPPG and SGIP…TSAE. Residues 96–106 show a composition bias toward pro residues; the sequence is GPAPRDAPLLP.

It belongs to the neuropeptide B/W family.

The protein localises to the secreted. Functionally, plays a regulatory role in the organization of neuroendocrine signals accessing the anterior pituitary gland. Stimulates water drinking and food intake. May play a role in the hypothalamic response to stress. In Sus scrofa (Pig), this protein is Neuropeptide W (NPW).